Reading from the N-terminus, the 141-residue chain is Galactose-6-phosphate isomerase subunit LacA 1 (141 aa).

This sequence belongs to the LacAB/RpiB family. Heteromultimeric protein consisting of LacA and LacB.

It catalyses the reaction aldehydo-D-galactose 6-phosphate = keto-D-tagatose 6-phosphate. The protein operates within carbohydrate metabolism; D-galactose 6-phosphate degradation; D-tagatose 6-phosphate from D-galactose 6-phosphate: step 1/1. This chain is Galactose-6-phosphate isomerase subunit LacA 1, found in Streptococcus agalactiae serotype III (strain NEM316).